A 175-amino-acid chain; its full sequence is O-acetyl-ADP-ribose deacetylase (175 aa).

In terms of domain architecture, Macro spans 1–175 (MAVQPEVILG…IYRRLLASYP (175 aa)). Residues 11–12 (DI), asparagine 25, 33–35 (GVD), and 122–126 (STGVY) each bind substrate. Aspartate 35 (proton acceptor) is an active-site residue.

Belongs to the MacroD-type family. YmdB subfamily. Homodimer. Interacts with RNase III.

It catalyses the reaction 3''-O-acetyl-ADP-D-ribose + H2O = ADP-D-ribose + acetate + H(+). The enzyme catalyses 2''-O-acetyl-ADP-D-ribose + H2O = ADP-D-ribose + acetate + H(+). Functionally, deacetylates O-acetyl-ADP ribose to yield ADP-ribose and free acetate. Down-regulates ribonuclease 3 (RNase III) activity. Acts by interacting directly with the region of the ribonuclease that is required for dimerization/activation. This Klebsiella pneumoniae (strain 342) protein is O-acetyl-ADP-ribose deacetylase.